Consider the following 321-residue polypeptide: MSDFYHKPVLLEESVHWLVSESGMYIDATLGGAGHSKEILHRLETQHLLSNSLLIGIDRDANAIRAATTRLATYAAHAHILRGRFADLKLLLETNGLLDSGNHPIRGILLDLGISSHQIDAPARGFSFQQSGPLDMRMSDTAQLTAAEVVNHYDERSLSKIFFDYGEEREAKWIARKIVEARKQTPLETTAALALLIRQNLNRKSPVEQTKTLARIFQAIRIEVNGELDELKAVLQAAHEVLSEKGRLVVISYHSLEDRIVKQFFNECASEDWGPKGVVLDVPIKTATMKILTKKPVLASEEEIQENSRARSAKLRVAEKI.

S-adenosyl-L-methionine is bound by residues 33 to 35 (AGH), aspartate 58, phenylalanine 85, aspartate 111, and glutamine 118.

It belongs to the methyltransferase superfamily. RsmH family.

It localises to the cytoplasm. It carries out the reaction cytidine(1402) in 16S rRNA + S-adenosyl-L-methionine = N(4)-methylcytidine(1402) in 16S rRNA + S-adenosyl-L-homocysteine + H(+). Specifically methylates the N4 position of cytidine in position 1402 (C1402) of 16S rRNA. This is Ribosomal RNA small subunit methyltransferase H from Chloroherpeton thalassium (strain ATCC 35110 / GB-78).